The primary structure comprises 488 residues: Galactose-1-phosphate uridylyltransferase (488 aa).

This sequence belongs to the galactose-1-phosphate uridylyltransferase type 2 family.

Its subcellular location is the cytoplasm. It carries out the reaction alpha-D-galactose 1-phosphate + UDP-alpha-D-glucose = alpha-D-glucose 1-phosphate + UDP-alpha-D-galactose. It functions in the pathway carbohydrate metabolism; galactose metabolism. In Lactobacillus helveticus (Lactobacillus suntoryeus), this protein is Galactose-1-phosphate uridylyltransferase (galT).